Reading from the N-terminus, the 710-residue chain is Dynein axonemal assembly factor 3 homolog (710 aa).

The tract at residues 403–487 (GAEAGAGAGP…DSDPAAAAST (85 aa)) is disordered. Gly residues predominate over residues 404–416 (AEAGAGAGPGGEA). The segment covering 417-438 (AAGASSSSGKEEAAAAAAAGKE) has biased composition (low complexity). Residues 453 to 462 (SGSGAPGAGT) show a composition bias toward gly residues. The segment covering 478–487 (DSDPAAAAST) has biased composition (low complexity).

It belongs to the DNAAF3 family.

It localises to the cytoplasm. Its function is as follows. Required for the assembly of axonemal inner and outer dynein arms. Involved in preassembly of dyneins into complexes before their transport into cilia. The sequence is that of Dynein axonemal assembly factor 3 homolog (DAB1) from Chlamydomonas reinhardtii (Chlamydomonas smithii).